The sequence spans 117 residues: Photosystem II reaction center Psb28 protein (117 aa).

Belongs to the Psb28 family. In terms of assembly, part of the photosystem II complex.

It localises to the cellular thylakoid membrane. This is Photosystem II reaction center Psb28 protein from Prochlorococcus marinus subsp. pastoris (strain CCMP1986 / NIES-2087 / MED4).